We begin with the raw amino-acid sequence, 331 residues long: Ferredoxin--NADP reductase 2 (331 aa).

7 residues coordinate FAD: Glu-37, Gln-45, Tyr-50, Val-90, Phe-124, Asp-286, and Thr-327.

Belongs to the ferredoxin--NADP reductase type 2 family. In terms of assembly, homodimer. FAD serves as cofactor.

The enzyme catalyses 2 reduced [2Fe-2S]-[ferredoxin] + NADP(+) + H(+) = 2 oxidized [2Fe-2S]-[ferredoxin] + NADPH. The protein is Ferredoxin--NADP reductase 2 of Listeria welshimeri serovar 6b (strain ATCC 35897 / DSM 20650 / CCUG 15529 / CIP 8149 / NCTC 11857 / SLCC 5334 / V8).